Reading from the N-terminus, the 124-residue chain is Holo-[acyl-carrier-protein] synthase (124 aa).

Mg(2+)-binding residues include D8 and E60.

The protein belongs to the P-Pant transferase superfamily. AcpS family. Mg(2+) is required as a cofactor.

It localises to the cytoplasm. The enzyme catalyses apo-[ACP] + CoA = holo-[ACP] + adenosine 3',5'-bisphosphate + H(+). Functionally, transfers the 4'-phosphopantetheine moiety from coenzyme A to a Ser of acyl-carrier-protein. In Wolbachia pipientis subsp. Culex pipiens (strain wPip), this protein is Holo-[acyl-carrier-protein] synthase.